The sequence spans 510 residues: NAD(P)H-quinone oxidoreductase subunit 2 B, chloroplastic (510 aa).

Helical transmembrane passes span L24–L44, W59–W79, I99–I119, M124–C144, L149–Y169, Y183–G203, I229–F249, W295–I315, M323–D343, Y354–L374, A395–F415, and L418–L438.

This sequence belongs to the complex I subunit 2 family. As to quaternary structure, NDH is composed of at least 16 different subunits, 5 of which are encoded in the nucleus.

Its subcellular location is the plastid. It is found in the chloroplast thylakoid membrane. The catalysed reaction is a plastoquinone + NADH + (n+1) H(+)(in) = a plastoquinol + NAD(+) + n H(+)(out). It carries out the reaction a plastoquinone + NADPH + (n+1) H(+)(in) = a plastoquinol + NADP(+) + n H(+)(out). NDH shuttles electrons from NAD(P)H:plastoquinone, via FMN and iron-sulfur (Fe-S) centers, to quinones in the photosynthetic chain and possibly in a chloroplast respiratory chain. The immediate electron acceptor for the enzyme in this species is believed to be plastoquinone. Couples the redox reaction to proton translocation, and thus conserves the redox energy in a proton gradient. The protein is NAD(P)H-quinone oxidoreductase subunit 2 B, chloroplastic of Agrostis stolonifera (Creeping bentgrass).